Reading from the N-terminus, the 417-residue chain is NADH-quinone oxidoreductase subunit D (417 aa).

The protein belongs to the complex I 49 kDa subunit family. In terms of assembly, NDH-1 is composed of 14 different subunits. Subunits NuoB, C, D, E, F, and G constitute the peripheral sector of the complex.

It localises to the cell inner membrane. It catalyses the reaction a quinone + NADH + 5 H(+)(in) = a quinol + NAD(+) + 4 H(+)(out). NDH-1 shuttles electrons from NADH, via FMN and iron-sulfur (Fe-S) centers, to quinones in the respiratory chain. The immediate electron acceptor for the enzyme in this species is believed to be ubiquinone. Couples the redox reaction to proton translocation (for every two electrons transferred, four hydrogen ions are translocated across the cytoplasmic membrane), and thus conserves the redox energy in a proton gradient. The chain is NADH-quinone oxidoreductase subunit D from Azoarcus sp. (strain BH72).